A 537-amino-acid polypeptide reads, in one-letter code: Caspase recruitment domain-containing protein 8 (537 aa).

Over residues 1 to 23 the composition is skewed to basic and acidic residues; it reads MEKKECPEKSSSSEEELPRRDSG. Disordered stretches follow at residues 1–28 and 113–133; these read MEKKECPEKSSSSEEELPRRDSGSSRNI and GDIPSVSEEQESSEGQDSGDI. Positions 161–296 are ZU5; that stretch reads FLGPEGNVDV…FYAVLESPSF (136 aa). Positions 161–446 constitute an FIIND domain; it reads FLGPEGNVDV…LQLVAASAPP (286 aa). Residues 297-446 form a UPA region; it reads SLMGILLRIA…LQLVAASAPP (150 aa). A CARD domain is found at 446–536; it reads PPFSGAAFVK…YLVSYLRQQN (91 aa).

As to quaternary structure, interacts with DPP9; leading to inhibit activation of the inflammasome. DPP9 acts via formation of a ternary complex, composed of a DPP9 homodimer, one full-length CARD8 protein, and one cleaved C-terminus of CARD8 (Caspase recruitment domain-containing protein 8, C-terminus). Interacts with DPP8; leading to inhibit activation of the inflammasome, probably via formation of a ternary complex with DPP8. Interacts with NLRP3. Interacts with IKBKG/NEMO. Interacts with DRAL. Binds to caspase-1 (CASP1), CARD16/pseudo-ICE and CARD18/ICEBERG. Interacts with NLRP2 (via NACHT domain). Interacts with the C-terminal part of CARD8 (Caspase recruitment domain-containing protein 8, C-terminus) in absence of pathogens and other damage-associated signals. In terms of assembly, interacts with the N-terminal part of CARD8 (Caspase recruitment domain-containing protein 8, N-terminus) in absence of pathogens and other damage-associated signals. Homomultimer; forms the CARD8 inflammasome polymeric complex, a filament composed of homopolymers of this form in response to pathogens and other damage-associated signals. The CARD8 inflammasome polymeric complex directly recruits pro-caspase-1 (proCASP1) independently of PYCARD/ASC. Interacts (via CARD domain) with CASP1 (via CARD domain); leading to CASP1 activation. Post-translationally, undergoes autocatalytic processing within the FIIND domain to generate the N-terminal and C-terminal parts, which are associated non-covalently in absence of pathogens and other damage-associated signals. In terms of processing, ubiquitinated by the N-end rule pathway in response to pathogens and other damage-associated signals, leading to its degradation by the proteasome and subsequent release of the cleaved C-terminal part of the protein (Caspase recruitment domain-containing protein 8, C-terminus), which polymerizes and forms the CARD8 inflammasome. (Microbial infection) Proteolytic cleavage by HIV-1 protease in the disordered region and within the ZU5 region of the FIIND domain promotes ubiquitination of the N-terminal part by the N-end rule pathway and degradation by the proteasome, releasing the cleaved C-terminal part of the protein (Caspase recruitment domain-containing protein 8, C-terminus), which polymerizes and forms the CARD8 inflammasome. Post-translationally, undergoes less autocatalytic processing within the FIIND domain compared to isoform 5. High expression in lung, ovary, testis and placenta. Lower expression in heart, kidney and liver. Also expressed in spleen, lymph node and bone marrow.

It is found in the cytoplasm. Its subcellular location is the nucleus. The protein resides in the inflammasome. Its activity is regulated as follows. CARD8 inflammasome is activated by HIV-1 protease activity: HIV-1 protease cleaves CARD8, promoting ubiquitination and degradation of the N-terminal part, releasing the cleaved C-terminal part of the protein (Caspase recruitment domain-containing protein 8, C-terminus), which polymerizes and forms the CARD8 inflammasome. CARD8 inflammasome is inhibited by DPP8 and DPP9, which sequester the C-terminal fragment of CARD8 (Caspase recruitment domain-containing protein 8, C-terminus) in a ternary complex, thereby preventing CARD8 oligomerization and activation. CARD8 inflammasome is activated by Val-boroPro (Talabostat, PT-100), an inhibitor of dipeptidyl peptidases DPP8 and DPP9. Val-boroPro relieves inhibition of DPP8 and/or DPP9 by inducing the proteasome-mediated destruction of the N-terminal part of CARD8, releasing its C-terminal part from autoinhibition. Indirectly activated by the pseudodipeptide CQ31. CQ31 directly inactivates the peptidases PEPD and XPNPEP1, leading to an accumulation of dipeptides that weaky inhibit DDP8 and DPP9, relieving DPP8- and/or DPP9-mediated inhibition of CARD8. Its function is as follows. Inflammasome sensor, which mediates inflammasome activation in response to various pathogen-associated signals, leading to subsequent pyroptosis of CD4(+) T-cells and macrophages. Inflammasomes are supramolecular complexes that assemble in the cytosol in response to pathogens and other damage-associated signals and play critical roles in innate immunity and inflammation. Acts as a recognition receptor (PRR): recognizes specific pathogens and other damage-associated signals, such as HIV-1 protease activity or Val-boroPro inhibitor, and mediates CARD8 inflammasome activation. In response to pathogen-associated signals, the N-terminal part of CARD8 is degraded by the proteasome, releasing the cleaved C-terminal part of the protein (Caspase recruitment domain-containing protein 8, C-terminus), which polymerizes to initiate the formation of the inflammasome complex: the CARD8 inflammasome directly recruits pro-caspase-1 (proCASP1) independently of PYCARD/ASC and promotes caspase-1 (CASP1) activation, which subsequently cleaves and activates inflammatory cytokines IL1B and IL18 and gasdermin-D (GSDMD), leading to pyroptosis. Ability to sense HIV-1 protease activity leads to the clearance of latent HIV-1 in patient CD4(+) T-cells after viral reactivation; in contrast, HIV-1 can evade CARD8-sensing when its protease remains inactive in infected cells prior to viral budding. Also acts as a negative regulator of the NLRP3 inflammasome. May also act as an inhibitor of NF-kappa-B activation. Constitutes the precursor of the CARD8 inflammasome, which mediates autoproteolytic processing within the FIIND domain to generate the N-terminal and C-terminal parts, which are associated non-covalently in absence of pathogens and other damage-associated signals. Functionally, regulatory part that prevents formation of the CARD8 inflammasome: in absence of pathogens and other damage-associated signals, interacts with the C-terminal part of CARD8 (Caspase recruitment domain-containing protein 8, C-terminus), preventing activation of the CARD8 inflammasome. In response to pathogen-associated signals, this part is ubiquitinated by the N-end rule pathway and degraded by the proteasome, releasing the cleaved C-terminal part of the protein, which polymerizes and forms the CARD8 inflammasome. In terms of biological role, constitutes the active part of the CARD8 inflammasome. In absence of pathogens and other damage-associated signals, interacts with the N-terminal part of CARD8 (Caspase recruitment domain-containing protein 8, N-terminus), preventing activation of the CARD8 inflammasome. In response to pathogen-associated signals, the N-terminal part of CARD8 is degraded by the proteasome, releasing this form, which polymerizes to form the CARD8 inflammasome complex: the CARD8 inflammasome complex then directly recruits pro-caspase-1 (proCASP1) and promotes caspase-1 (CASP1) activation, leading to gasdermin-D (GSDMD) cleavage and subsequent pyroptosis. In Homo sapiens (Human), this protein is Caspase recruitment domain-containing protein 8.